We begin with the raw amino-acid sequence, 308 residues long: Transaldolase (308 aa).

K125 acts as the Schiff-base intermediate with substrate in catalysis.

The protein belongs to the transaldolase family. Type 1 subfamily. Homodimer.

The protein resides in the cytoplasm. The catalysed reaction is D-sedoheptulose 7-phosphate + D-glyceraldehyde 3-phosphate = D-erythrose 4-phosphate + beta-D-fructose 6-phosphate. It participates in carbohydrate degradation; pentose phosphate pathway; D-glyceraldehyde 3-phosphate and beta-D-fructose 6-phosphate from D-ribose 5-phosphate and D-xylulose 5-phosphate (non-oxidative stage): step 2/3. Functionally, transaldolase is important for the balance of metabolites in the pentose-phosphate pathway. The sequence is that of Transaldolase from Pseudomonas savastanoi pv. phaseolicola (strain 1448A / Race 6) (Pseudomonas syringae pv. phaseolicola (strain 1448A / Race 6)).